Reading from the N-terminus, the 92-residue chain is Large ribosomal subunit protein bL27 (92 aa).

The propeptide occupies 1 to 8 (MLMNLQFF). The segment at 11–30 (HKGGGSTANGRDSAGRRLGA) is disordered.

The protein belongs to the bacterial ribosomal protein bL27 family. Post-translationally, the N-terminus is cleaved by ribosomal processing cysteine protease Prp.

This Lactiplantibacillus plantarum (strain ATCC BAA-793 / NCIMB 8826 / WCFS1) (Lactobacillus plantarum) protein is Large ribosomal subunit protein bL27.